Consider the following 246-residue polypeptide: Probable transcriptional regulatory protein BVU_3469 (246 aa).

This sequence belongs to the TACO1 family.

The protein localises to the cytoplasm. The polypeptide is Probable transcriptional regulatory protein BVU_3469 (Phocaeicola vulgatus (strain ATCC 8482 / DSM 1447 / JCM 5826 / CCUG 4940 / NBRC 14291 / NCTC 11154) (Bacteroides vulgatus)).